The chain runs to 549 residues: Undecaprenyl phosphate-alpha-4-amino-4-deoxy-L-arabinose arabinosyl transferase (549 aa).

Transmembrane regions (helical) follow at residues 9 to 29 (LLLIAFGLFYLVPLSNHGLWI), 80 to 100 (LFGVRIASVVATALSVLLAYL), 112 to 132 (SLACALLYASFGLIAGQSGYA), 136 to 156 (PQFTFWVNLSLVALWHALDAG), 176 to 196 (FLTKGFLAWLLPVLVALPYML), 204 to 224 (LLGYGALAVLAALLVCLPWAL), 256 to 276 (PWWFYLPLLAVACLPWSGLLP), 288 to 308 (QAPVVFLALWLLLPLAFFSLS), 312 to 332 (LPTYIMPCLLPLALLMGHALV), 346 to 366 (NGLLNLGLALLALAALAYLQL), 376 to 396 (FELFLVLLVIGAWAAAGLAQW), and 402 to 422 (AWAAPLLASWVLIALLPAAMP).

Belongs to the glycosyltransferase 83 family.

Its subcellular location is the cell inner membrane. It catalyses the reaction 4-amino-4-deoxy-alpha-L-arabinopyranosyl di-trans,octa-cis-undecaprenyl phosphate + lipid IVA = lipid IIA + di-trans,octa-cis-undecaprenyl phosphate.. It participates in lipopolysaccharide metabolism; 4-amino-4-deoxy-beta-L-arabinose-lipid A biosynthesis. Its function is as follows. Catalyzes the transfer of the L-Ara4N moiety of the glycolipid undecaprenyl phosphate-alpha-L-Ara4N to lipid A. The modified arabinose is attached to lipid A and is required for resistance to polymyxin and cationic antimicrobial peptides. In Pseudomonas aeruginosa (strain ATCC 15692 / DSM 22644 / CIP 104116 / JCM 14847 / LMG 12228 / 1C / PRS 101 / PAO1), this protein is Undecaprenyl phosphate-alpha-4-amino-4-deoxy-L-arabinose arabinosyl transferase.